The following is a 1657-amino-acid chain: Ras GTPase-activating-like protein IQGAP1 (1657 aa).

The residue at position 2 (Ser-2) is an N-acetylserine. Ser-2 carries the phosphoserine modification. A Calponin-homology (CH) domain is found at Leu-44 to Leu-159. Tyr-172 is subject to Phosphotyrosine. Residue Ser-330 is modified to Phosphoserine. A WW domain is found at Gly-679 to Asn-712. IQ domains are found at residues Asn-745–Lys-774, Gln-775–Ser-804, His-805–Asp-834, and His-835–Pro-864. A C1 region spans residues Gly-956 to Glu-1274. The Ras-GAP domain maps to Tyr-1020–Ala-1269. The C2 stretch occupies residues Gln-1276–Lys-1657. Positions Thr-1410–Ser-1448 are disordered. Basic and acidic residues predominate over residues Glu-1417–Ser-1448. Ser-1441 is modified (phosphoserine; by PKC). Position 1443 is a phosphoserine; by PKC/PRKCE (Ser-1443).

In terms of assembly, interacts with CDC42; the interaction is demonstrated with IQGAP1 in GTP-bound and in nucleotide-free state. Interacts with RAC1. Does not interact with RHOA. Interacts with TSG101. Interacts with PAK6. Interacts with TMEM14B; this interaction increases IQGAP1 phosphorylation and induces its nuclear translocation. Interacts with SASH1. Interacts with PJVK. Interacts with SLC26A4; this interaction enhances the chloride-bicarbonate exchange activity of SLC26A4. Interacts with SVEP1. Interacts with ILK; the interaction is required for localization of IQGAP to the cell cortex. (Microbial infection) Interacts with ebolavirus vp40. As to quaternary structure, (Microbial infection) Interacts with human cytomegalovirus protein UL5. In terms of assembly, (Microbial infection) Interacts with C.jejuni invasion antigen D (CiaD). In terms of processing, phosphorylation of Ser-1443 by PKC/PRKCE prevents interaction between C1 and C2, allowing binding of nucleotide-free CDC42. Ser-1443 phosphorylation enhances the ability to promote neurite outgrowth. Expressed in the placenta, lung, and kidney. A lower level expression is seen in the heart, liver, skeletal muscle and pancreas.

It localises to the cell membrane. The protein localises to the nucleus. It is found in the cytoplasm. The protein resides in the cell cortex. Its subcellular location is the apical cell membrane. It localises to the basolateral cell membrane. Its function is as follows. Plays a crucial role in regulating the dynamics and assembly of the actin cytoskeleton. Recruited to the cell cortex by interaction with ILK which allows it to cooperate with its effector DIAPH1 to locally stabilize microtubules and allow stable insertion of caveolae into the plasma membrane. Binds to activated CDC42 but does not stimulate its GTPase activity. Associates with calmodulin. May promote neurite outgrowth. May play a possible role in cell cycle regulation by contributing to cell cycle progression after DNA replication arrest. The sequence is that of Ras GTPase-activating-like protein IQGAP1 (IQGAP1) from Homo sapiens (Human).